The chain runs to 235 residues: Protein fmp52-1, mitochondrial (235 aa).

A mitochondrion-targeting transit peptide spans 1–36 (MANTALIGCTGMVGSFILNNLLAHPSVARVDTISRR).

Belongs to the FMP52 family.

Its subcellular location is the mitochondrion outer membrane. The polypeptide is Protein fmp52-1, mitochondrial (fmp521) (Aspergillus oryzae (strain ATCC 42149 / RIB 40) (Yellow koji mold)).